Reading from the N-terminus, the 950-residue chain is Protocadherin alpha-13 (950 aa).

The first 29 residues, 1 to 29 (MLSSWQGGPRPRQLLLWLLILAAWETGSG), serve as a signal peptide directing secretion. Residues 30–697 (QLHYSVPEEA…GPEAALVDVN (668 aa)) lie on the Extracellular side of the membrane. Cadherin domains are found at residues 34–133 (SVPE…PPIF), 134–242 (PESK…APEF), 243–350 (YQSV…APEV), 351–455 (TITS…APAF), 456–565 (AQPE…APAL), and 581–678 (MPRS…APQA). N-linked (GlcNAc...) asparagine glycans are attached at residues N257 and N265. N-linked (GlcNAc...) asparagine glycosylation is present at N548. Residues 698-718 (VYLIIAICAVSSLLVLTLLLY) traverse the membrane as a helical segment. Residues 719-950 (TALRCSAPPT…GNSTTDNSDQ (232 aa)) are Cytoplasmic-facing. 6 PXXP repeats span residues 734-737 (PGKP), 774-777 (PSLP), 799-802 (PRQP), 832-835 (PGGP), 873-876 (PGNP), and 891-894 (PGSP). A 6 X 4 AA repeats of P-X-X-P region spans residues 734–894 (PGKPTLVCSS…PDKFIIPGSP (161 aa)). 2 disordered regions span residues 774–808 (PSLP…DWRY) and 827–950 (ILRA…NSDQ). Basic and acidic residues predominate over residues 787-800 (GQREEDSEGLKEPR). Residues 909–923 (DKSDFITFGKKEETK) are compositionally biased toward basic and acidic residues.

It localises to the cell membrane. Functionally, potential calcium-dependent cell-adhesion protein. May be involved in the establishment and maintenance of specific neuronal connections in the brain. The chain is Protocadherin alpha-13 (PCDHA13) from Pan troglodytes (Chimpanzee).